Reading from the N-terminus, the 432-residue chain is D-amino acid dehydrogenase (432 aa).

An FAD-binding site is contributed by Val-3–Trp-17.

This sequence belongs to the DadA oxidoreductase family. FAD serves as cofactor.

It carries out the reaction a D-alpha-amino acid + A + H2O = a 2-oxocarboxylate + AH2 + NH4(+). It functions in the pathway amino-acid degradation; D-alanine degradation; NH(3) and pyruvate from D-alanine: step 1/1. Oxidative deamination of D-amino acids. In Shigella boydii serotype 18 (strain CDC 3083-94 / BS512), this protein is D-amino acid dehydrogenase.